The following is a 208-amino-acid chain: Small ribosomal subunit protein uS3 (208 aa).

One can recognise a KH type-2 domain in the interval 16 to 85; sequence VDEYLKNKLP…KPQIEVKQIE (70 aa).

It belongs to the universal ribosomal protein uS3 family. In terms of assembly, part of the 30S ribosomal subunit.

Binds the lower part of the 30S subunit head. The polypeptide is Small ribosomal subunit protein uS3 (Methanococcus aeolicus (strain ATCC BAA-1280 / DSM 17508 / OCM 812 / Nankai-3)).